The sequence spans 82 residues: M-zodatoxin-Lt3a (82 aa).

An N-terminal signal peptide occupies residues methionine 1–glycine 22. A propeptide spanning residues tyrosine 23 to arginine 61 is cleaved from the precursor. The short motif at glutamate 58 to arginine 61 is the Processing quadruplet motif element. An Alanine amide modification is found at alanine 81.

This sequence belongs to the cationic peptide 03 (latarcin) family. 03 subfamily. Cleavage of the propeptide depends on the processing quadruplet motif (XXXR, with at least one of X being E). Expressed by the venom gland.

It localises to the secreted. Its subcellular location is the target cell membrane. It has antimicrobial activity against Gram-positive bacteria (A.globiformis VKM Ac-1112 (MIC=0.3 uM), and B.subtilis VKM B-501 (MIC=1.2 uM)), Gram-negative bacteria (E.coli DH5-alpha (MIC=2.5 uM), E.coli MH1 (MIC=6.0 uM), and P.aeruginosa PAO1 (MIC&gt;40 uM)), and yeasts (P.pastoris GS115 (MIC=20 uM), and S.cerevisiae Y190 (MIC=20 uM)). Causes paralysis, but is not lethal when injected into insect (M.domestica) larvae. A second study reports antibacterial activity against E.coli (MIC=100 uM) and S.aureus (MIC=84 uM). Furthermore, increases efficacy of antibiotics (chloramphenicol, streptomycin, kanamycin, novobiocin) when tested against E.coli, probably by facilitating their incorporation into the bacteria. This is M-zodatoxin-Lt3a from Lachesana tarabaevi (Spider).